The sequence spans 153 residues: Small ribosomal subunit protein bS16 (153 aa).

Positions Glu114 to Lys153 are disordered. Residues Ala137–Lys153 are compositionally biased toward low complexity.

Belongs to the bacterial ribosomal protein bS16 family.

This Rhodococcus opacus (strain B4) protein is Small ribosomal subunit protein bS16.